A 595-amino-acid polypeptide reads, in one-letter code: NADH-quinone oxidoreductase subunit C/D (595 aa).

An NADH dehydrogenase I subunit C region spans residues 1 to 186 (MAETDIAMPE…TPYMQNQAKQ (186 aa)). The segment at 210–595 (DFMFLNLGPN…IDVVMADVDR (386 aa)) is NADH dehydrogenase I subunit D.

This sequence in the N-terminal section; belongs to the complex I 30 kDa subunit family. In the C-terminal section; belongs to the complex I 49 kDa subunit family. NDH-1 is composed of 13 different subunits. Subunits NuoB, CD, E, F, and G constitute the peripheral sector of the complex.

The protein resides in the cell inner membrane. The enzyme catalyses a quinone + NADH + 5 H(+)(in) = a quinol + NAD(+) + 4 H(+)(out). Its function is as follows. NDH-1 shuttles electrons from NADH, via FMN and iron-sulfur (Fe-S) centers, to quinones in the respiratory chain. The immediate electron acceptor for the enzyme in this species is believed to be ubiquinone. Couples the redox reaction to proton translocation (for every two electrons transferred, four hydrogen ions are translocated across the cytoplasmic membrane), and thus conserves the redox energy in a proton gradient. The polypeptide is NADH-quinone oxidoreductase subunit C/D (Acinetobacter baylyi (strain ATCC 33305 / BD413 / ADP1)).